The primary structure comprises 136 residues: uncharacterized protein (136 aa).

2 disordered regions span residues 23–44 (QESL…KEDN) and 56–95 (DGVI…ESAR). Positions 61 to 79 (SEEGCSSSGEKENSGLCSE) are enriched in low complexity. A compositionally biased stretch (acidic residues) spans 80 to 91 (ESSEEDPEEAEE).

This is an uncharacterized protein from Saccharomyces cerevisiae (strain ATCC 204508 / S288c) (Baker's yeast).